A 272-amino-acid polypeptide reads, in one-letter code: Phosphoglycolate phosphatase 1 (272 aa).

Asp19 functions as the Nucleophile in the catalytic mechanism. 3 residues coordinate Mg(2+): Asp19, Asp21, and Asp182.

Belongs to the HAD-like hydrolase superfamily. CbbY/CbbZ/Gph/YieH family. It depends on Mg(2+) as a cofactor.

It carries out the reaction 2-phosphoglycolate + H2O = glycolate + phosphate. The protein operates within organic acid metabolism; glycolate biosynthesis; glycolate from 2-phosphoglycolate: step 1/1. Its function is as follows. Specifically catalyzes the dephosphorylation of 2-phosphoglycolate. Is involved in the dissimilation of the intracellular 2-phosphoglycolate formed during the DNA repair of 3'-phosphoglycolate ends, a major class of DNA lesions induced by oxidative stress. This chain is Phosphoglycolate phosphatase 1, found in Pseudomonas aeruginosa (strain ATCC 15692 / DSM 22644 / CIP 104116 / JCM 14847 / LMG 12228 / 1C / PRS 101 / PAO1).